The following is an 88-amino-acid chain: Probable glutaredoxin ssr2061 (88 aa).

A disulfide bridge connects residues C15 and C18.

The protein belongs to the glutaredoxin family.

In terms of biological role, has a glutathione-disulfide oxidoreductase activity in the presence of NADPH and glutathione reductase. Reduces low molecular weight disulfides and proteins. The protein is Probable glutaredoxin ssr2061 of Synechocystis sp. (strain ATCC 27184 / PCC 6803 / Kazusa).